Here is a 392-residue protein sequence, read N- to C-terminus: Formate-dependent phosphoribosylglycinamide formyltransferase (392 aa).

N(1)-(5-phospho-beta-D-ribosyl)glycinamide-binding positions include 22–23 (EL) and glutamate 82. ATP is bound by residues arginine 114, lysine 155, 160-165 (SSGKGQ), 195-198 (EGVV), and glutamate 203. The ATP-grasp domain occupies 119–308 (RLAAEELQLP…EFALHVRAFL (190 aa)). Residues glutamate 267 and glutamate 279 each coordinate Mg(2+). Residues aspartate 286, lysine 355, and 362–363 (RR) contribute to the N(1)-(5-phospho-beta-D-ribosyl)glycinamide site.

It belongs to the PurK/PurT family. In terms of assembly, homodimer.

It carries out the reaction N(1)-(5-phospho-beta-D-ribosyl)glycinamide + formate + ATP = N(2)-formyl-N(1)-(5-phospho-beta-D-ribosyl)glycinamide + ADP + phosphate + H(+). Its pathway is purine metabolism; IMP biosynthesis via de novo pathway; N(2)-formyl-N(1)-(5-phospho-D-ribosyl)glycinamide from N(1)-(5-phospho-D-ribosyl)glycinamide (formate route): step 1/1. Involved in the de novo purine biosynthesis. Catalyzes the transfer of formate to 5-phospho-ribosyl-glycinamide (GAR), producing 5-phospho-ribosyl-N-formylglycinamide (FGAR). Formate is provided by PurU via hydrolysis of 10-formyl-tetrahydrofolate. This Klebsiella pneumoniae (strain 342) protein is Formate-dependent phosphoribosylglycinamide formyltransferase.